Here is a 521-residue protein sequence, read N- to C-terminus: Glucose-1-phosphate adenylyltransferase large subunit 3, chloroplastic (521 aa).

Residues 1–61 (MDSCCNFSLG…RKLRPGVAYA (61 aa)) constitute a chloroplast transit peptide.

It belongs to the bacterial/plant glucose-1-phosphate adenylyltransferase family. As to quaternary structure, heterotetramer. Probably are expressed in roots, flowers and/or seeds.

It localises to the plastid. Its subcellular location is the chloroplast. It carries out the reaction alpha-D-glucose 1-phosphate + ATP + H(+) = ADP-alpha-D-glucose + diphosphate. It participates in glycan biosynthesis; starch biosynthesis. Activated by 3'phosphoglycerate, inhibited by orthophosphate. Allosteric regulation. Its function is as follows. This protein plays a role in synthesis of starch. It catalyzes the synthesis of the activated glycosyl donor, ADP-glucose from Glc-1-P and ATP. In Arabidopsis thaliana (Mouse-ear cress), this protein is Glucose-1-phosphate adenylyltransferase large subunit 3, chloroplastic (APL3).